A 611-amino-acid chain; its full sequence is Chaperone protein DnaK (611 aa).

Phosphothreonine; by autocatalysis is present on Thr-173. The span at 577-591 (AAAAQAAQGGEADAG) shows a compositional bias: low complexity. A disordered region spans residues 577 to 611 (AAAAQAAQGGEADAGAGKKDDGVVDADFEEVKDDK). Residues 599-611 (VVDADFEEVKDDK) show a composition bias toward acidic residues.

The protein belongs to the heat shock protein 70 family.

Its function is as follows. Acts as a chaperone. This is Chaperone protein DnaK from Lysinibacillus sphaericus (strain C3-41).